A 101-amino-acid polypeptide reads, in one-letter code: Putative antitoxin HigA2 (101 aa).

In terms of domain architecture, HTH cro/C1-type spans 35–90 (LRELRAAQSLTQVQVAALAHIRQSRVSSIENGDIGSAQVNTLRKYVSALGGELDIT). Positions 46–65 (QVQVAALAHIRQSRVSSIEN) form a DNA-binding region, H-T-H motif.

Putative antitoxin component of a type II toxin-antitoxin (TA) system. Its cognate toxin would be HigB2. In Mycobacterium tuberculosis (strain ATCC 25618 / H37Rv), this protein is Putative antitoxin HigA2.